The sequence spans 1240 residues: ATP-dependent helicase/nuclease subunit A (1240 aa).

The UvrD-like helicase ATP-binding domain occupies 12 to 485; it reads SQWTDDQWKA…IDLAKNFRSR (474 aa). An ATP-binding site is contributed by 33–40; it reads AAAGSGKT. A UvrD-like helicase C-terminal domain is found at 497-804; sequence KQIMGEEVGE…RIMTIHKSKG (308 aa).

This sequence belongs to the helicase family. AddA subfamily. Heterodimer of AddA and AddB/RexB. Mg(2+) is required as a cofactor.

It carries out the reaction Couples ATP hydrolysis with the unwinding of duplex DNA by translocating in the 3'-5' direction.. The enzyme catalyses ATP + H2O = ADP + phosphate + H(+). In terms of biological role, the heterodimer acts as both an ATP-dependent DNA helicase and an ATP-dependent, dual-direction single-stranded exonuclease. Recognizes the chi site generating a DNA molecule suitable for the initiation of homologous recombination. The AddA nuclease domain is required for chi fragment generation; this subunit has the helicase and 3' -&gt; 5' nuclease activities. This chain is ATP-dependent helicase/nuclease subunit A, found in Bacillus cereus (strain AH820).